A 377-amino-acid chain; its full sequence is Nitric oxide reductase FlRd-NAD(+) reductase (377 aa).

Belongs to the FAD-dependent oxidoreductase family. The cofactor is FAD.

It is found in the cytoplasm. It carries out the reaction 2 reduced [nitric oxide reductase rubredoxin domain] + NAD(+) + H(+) = 2 oxidized [nitric oxide reductase rubredoxin domain] + NADH. The protein operates within nitrogen metabolism; nitric oxide reduction. One of at least two accessory proteins for anaerobic nitric oxide (NO) reductase. Reduces the rubredoxin moiety of NO reductase. This is Nitric oxide reductase FlRd-NAD(+) reductase from Salmonella typhi.